The chain runs to 70 residues: Translational regulator CsrA (70 aa).

Belongs to the CsrA/RsmA family. As to quaternary structure, homodimer; the beta-strands of each monomer intercalate to form a hydrophobic core, while the alpha-helices form wings that extend away from the core.

It localises to the cytoplasm. Functionally, a translational regulator that binds mRNA to regulate translation initiation and/or mRNA stability. Usually binds in the 5'-UTR at or near the Shine-Dalgarno sequence preventing ribosome-binding, thus repressing translation. Its main target seems to be the major flagellin gene, while its function is anatagonized by FliW. In Clostridioides difficile (strain 630) (Peptoclostridium difficile), this protein is Translational regulator CsrA.